Reading from the N-terminus, the 467-residue chain is Glutamate--tRNA ligase (467 aa).

Positions 9–19 (PSPTGYLHIGG) match the 'HIGH' region motif. Residues 237–241 (KLSKR) carry the 'KMSKS' region motif. An ATP-binding site is contributed by K240.

It belongs to the class-I aminoacyl-tRNA synthetase family. Glutamate--tRNA ligase type 1 subfamily. As to quaternary structure, monomer.

The protein resides in the cytoplasm. It catalyses the reaction tRNA(Glu) + L-glutamate + ATP = L-glutamyl-tRNA(Glu) + AMP + diphosphate. Its function is as follows. Catalyzes the attachment of glutamate to tRNA(Glu) in a two-step reaction: glutamate is first activated by ATP to form Glu-AMP and then transferred to the acceptor end of tRNA(Glu). This Xylella fastidiosa (strain M23) protein is Glutamate--tRNA ligase.